The following is a 601-amino-acid chain: Tripeptidyl-peptidase SED4 (601 aa).

Positions 1–22 are cleaved as a signal peptide; it reads MVSFTLRAIGACLVSLPALVTA. A propeptide spans 23-202 (removed in mature form); sequence APTSHISGDF…SVFTSDLEIT (180 aa). N-linked (GlcNAc...) asparagine glycans are attached at residues Asn210 and Asn281. In terms of domain architecture, Peptidase S53 spans 212 to 601; it reads TITPDCIRDL…ETLSKLVLQY (390 aa). Residues Glu288 and Asp292 each act as charge relay system in the active site. N-linked (GlcNAc...) asparagine glycosylation is present at Asn323. Ser504 serves as the catalytic Charge relay system. Ca(2+) is bound by residues Asp546 and Ile547. The N-linked (GlcNAc...) asparagine glycan is linked to Asn575. Gly579 and Asp581 together coordinate Ca(2+).

The cofactor is Ca(2+).

Its subcellular location is the secreted. It localises to the extracellular space. The catalysed reaction is Release of an N-terminal tripeptide from a polypeptide.. Functionally, secreted tripeptidyl-peptidase which degrades proteins at acidic pHs and is involved in virulence. The sequence is that of Tripeptidyl-peptidase SED4 (SED4) from Arthroderma otae (strain ATCC MYA-4605 / CBS 113480) (Microsporum canis).